The following is a 206-amino-acid chain: Glycerol-3-phosphate acyltransferase (206 aa).

The next 5 helical transmembrane spans lie at 14–34, 67–87, 91–111, 124–144, and 148–168; these read IALA…GLIL, ATLL…GYFL, AAII…WIGF, LLGV…AVAV, and YSSL…LILG.

The protein belongs to the PlsY family. In terms of assembly, probably interacts with PlsX.

Its subcellular location is the cell inner membrane. It carries out the reaction an acyl phosphate + sn-glycerol 3-phosphate = a 1-acyl-sn-glycero-3-phosphate + phosphate. It participates in lipid metabolism; phospholipid metabolism. Catalyzes the transfer of an acyl group from acyl-phosphate (acyl-PO(4)) to glycerol-3-phosphate (G3P) to form lysophosphatidic acid (LPA). This enzyme utilizes acyl-phosphate as fatty acyl donor, but not acyl-CoA or acyl-ACP. In Rhizobium etli (strain ATCC 51251 / DSM 11541 / JCM 21823 / NBRC 15573 / CFN 42), this protein is Glycerol-3-phosphate acyltransferase.